The following is a 1121-amino-acid chain: RecBCD enzyme subunit RecC (1121 aa).

The protein belongs to the RecC family. In terms of assembly, heterotrimer of RecB, RecC and RecD. All subunits contribute to DNA-binding.

In terms of biological role, a helicase/nuclease that prepares dsDNA breaks (DSB) for recombinational DNA repair. Binds to DSBs and unwinds DNA via a highly rapid and processive ATP-dependent bidirectional helicase activity. Unwinds dsDNA until it encounters a Chi (crossover hotspot instigator) sequence from the 3' direction. Cuts ssDNA a few nucleotides 3' to the Chi site. The properties and activities of the enzyme are changed at Chi. The Chi-altered holoenzyme produces a long 3'-ssDNA overhang and facilitates RecA-binding to the ssDNA for homologous DNA recombination and repair. Holoenzyme degrades any linearized DNA that is unable to undergo homologous recombination. In the holoenzyme this subunit recognizes the wild-type Chi sequence, and when added to isolated RecB increases its ATP-dependent helicase processivity. In Haemophilus influenzae (strain ATCC 51907 / DSM 11121 / KW20 / Rd), this protein is RecBCD enzyme subunit RecC.